Reading from the N-terminus, the 181-residue chain is Thioredoxin M-type, chloroplastic (181 aa).

A chloroplast-targeting transit peptide spans 1–67 (MAIENCLQLS…RQFRYSSVVC (67 aa)). The Thioredoxin domain maps to 68–180 (KASEAVKEVQ…LTDSIEKYLS (113 aa)). Catalysis depends on nucleophile residues Cys-104 and Cys-107. Cys-104 and Cys-107 are oxidised to a cystine.

This sequence belongs to the thioredoxin family. Plant M-type subfamily. As to quaternary structure, forms a complex with heterodimeric ferredoxin-thioredoxin reductase (FTR) and ferredoxin.

Its subcellular location is the plastid. The protein localises to the chloroplast. Its function is as follows. Participates in various redox reactions through the reversible oxidation of the active center dithiol to a disulfide. The M form is known to activate NADP-malate dehydrogenase. This Spinacia oleracea (Spinach) protein is Thioredoxin M-type, chloroplastic.